A 257-amino-acid polypeptide reads, in one-letter code: Acetylglutamate kinase (257 aa).

Residues Gly-43–Gly-44, Arg-65, and Asn-157 contribute to the substrate site. Residues Asp-180–Leu-185 and Ile-208–Thr-210 contribute to the ATP site.

The protein belongs to the acetylglutamate kinase family. ArgB subfamily. As to quaternary structure, homodimer.

It localises to the cytoplasm. The enzyme catalyses N-acetyl-L-glutamate + ATP = N-acetyl-L-glutamyl 5-phosphate + ADP. It participates in amino-acid biosynthesis; L-arginine biosynthesis; N(2)-acetyl-L-ornithine from L-glutamate: step 2/4. Catalyzes the ATP-dependent phosphorylation of N-acetyl-L-glutamate. The protein is Acetylglutamate kinase of Salmonella paratyphi B (strain ATCC BAA-1250 / SPB7).